A 217-amino-acid polypeptide reads, in one-letter code: Adenylate kinase (217 aa).

ATP is bound at residue 10–15; it reads GIGKGT. The tract at residues 30 to 59 is NMP; sequence ATGDIFRKNFKENTELGILIKKIIAQGLLV. Residues T31, R36, 57-59, 85-88, and Q92 contribute to the AMP site; these read LLV and GFPR. The LID stretch occupies residues 126–163; sequence GRRICPECGKVYHIENIPPKTPGICDKDQKTLIQREDD. Residue R127 coordinates ATP. Positions 130 and 133 each coordinate Zn(2+). 136–137 contributes to the ATP binding site; that stretch reads VY. Zn(2+)-binding residues include C150 and D153. AMP contacts are provided by R160 and R171. Q199 contacts ATP.

It belongs to the adenylate kinase family. As to quaternary structure, monomer.

The protein resides in the cytoplasm. It carries out the reaction AMP + ATP = 2 ADP. The protein operates within purine metabolism; AMP biosynthesis via salvage pathway; AMP from ADP: step 1/1. Catalyzes the reversible transfer of the terminal phosphate group between ATP and AMP. Plays an important role in cellular energy homeostasis and in adenine nucleotide metabolism. The sequence is that of Adenylate kinase from Onion yellows phytoplasma (strain OY-M).